Here is a 551-residue protein sequence, read N- to C-terminus: Palmdelphin (551 aa).

The residue at position 1 (M1) is an N-acetylmethionine. Residues 12–106 (QAITDKRKIQ…LQISANEEAI (95 aa)) are a coiled coil. A Glycyl lysine isopeptide (Lys-Gly) (interchain with G-Cter in SUMO2) cross-link involves residue K125. S135 bears the Phosphoserine mark. K178 is covalently cross-linked (Glycyl lysine isopeptide (Lys-Gly) (interchain with G-Cter in SUMO1); alternate). Residue K178 forms a Glycyl lysine isopeptide (Lys-Gly) (interchain with G-Cter in SUMO2); alternate linkage. Residues 247–258 (ERNSKSPTEYHE) are compositionally biased toward basic and acidic residues. Residues 247 to 266 (ERNSKSPTEYHEPVYANPFC) are disordered. T270 is modified (phosphothreonine). Disordered stretches follow at residues 294–390 (LGNH…TCQE) and 451–533 (AEDN…GTED). Residues S321 and S349 each carry the phosphoserine modification. The segment covering 341 to 353 (HTQQKRMASPWEE) has biased composition (polar residues). Over residues 354–365 (SSNRQNEHEVSP) the composition is skewed to basic and acidic residues. Residues S370, S375, S384, S385, S498, S515, and S520 each carry the phosphoserine modification.

It belongs to the paralemmin family. As to quaternary structure, interacts with GLUL. In terms of processing, phosphorylated. As to expression, ubiquitous. Expressed at highest levels in the heart and lung.

Its subcellular location is the cytoplasm. The protein localises to the cell projection. It localises to the dendrite. It is found in the dendritic spine. This chain is Palmdelphin (Palmd), found in Mus musculus (Mouse).